A 152-amino-acid polypeptide reads, in one-letter code: Large-conductance mechanosensitive channel (152 aa).

3 consecutive transmembrane segments (helical) span residues 21–41 (IDLA…DSLV), 44–64 (VVMP…NKFL), and 92–112 (GNFI…FWMV).

Belongs to the MscL family. As to quaternary structure, homopentamer.

Its subcellular location is the cell inner membrane. Functionally, channel that opens in response to stretch forces in the membrane lipid bilayer. May participate in the regulation of osmotic pressure changes within the cell. This chain is Large-conductance mechanosensitive channel, found in Bordetella pertussis (strain Tohama I / ATCC BAA-589 / NCTC 13251).